Reading from the N-terminus, the 327-residue chain is Cobalamin biosynthesis protein CobD (327 aa).

Transmembrane regions (helical) follow at residues 60–80 (GMWL…VLEL), 82–102 (LPFA…VLLA), 159–179 (DGIV…LFAY), and 304–324 (LFWS…LIGL).

The protein belongs to the CobD/CbiB family.

It localises to the cell membrane. It participates in cofactor biosynthesis; adenosylcobalamin biosynthesis. In terms of biological role, converts cobyric acid to cobinamide by the addition of aminopropanol on the F carboxylic group. The sequence is that of Cobalamin biosynthesis protein CobD from Brucella anthropi (strain ATCC 49188 / DSM 6882 / CCUG 24695 / JCM 21032 / LMG 3331 / NBRC 15819 / NCTC 12168 / Alc 37) (Ochrobactrum anthropi).